A 298-amino-acid polypeptide reads, in one-letter code: MQFEKMITEGSNTASAEIDRVSTLEMCRIINDEDKTVPLAVERVLPDIAAAIDVIHAQVSGGGRLIYLGAGTSGRLGILDASECPPTYGVKPGLVVGLIAGGEYAIQHAVEGAEDSREGGVNDLKNINLTAQDVVVGIAASGRTPYVIAGLEYARQLGCRTVGISCNPGSAVSTTAEFAITPIVGAEVVTGSSRMKAGTAQKLVLNMLSTGLMIKSGKVFGNLMVDVVATNEKLHVRQVNIVKNATGCSAEQAEAALIACERNCKTAIVMVLKNLDAAEAKKRLDQHGGFIRQVLDKE.

The region spanning 55–218 (IHAQVSGGGR…STGLMIKSGK (164 aa)) is the SIS domain. Glu-83 serves as the catalytic Proton donor. Residue Glu-114 is part of the active site.

Belongs to the GCKR-like family. MurNAc-6-P etherase subfamily. As to quaternary structure, homodimer.

The catalysed reaction is N-acetyl-D-muramate 6-phosphate + H2O = N-acetyl-D-glucosamine 6-phosphate + (R)-lactate. Its pathway is amino-sugar metabolism; N-acetylmuramate degradation. It functions in the pathway amino-sugar metabolism; 1,6-anhydro-N-acetylmuramate degradation. It participates in cell wall biogenesis; peptidoglycan recycling. Its function is as follows. Specifically catalyzes the cleavage of the D-lactyl ether substituent of MurNAc 6-phosphate, producing GlcNAc 6-phosphate and D-lactate. Together with AnmK, is also required for the utilization of anhydro-N-acetylmuramic acid (anhMurNAc) either imported from the medium or derived from its own cell wall murein, and thus plays a role in cell wall recycling. In Escherichia coli (strain K12 / MC4100 / BW2952), this protein is N-acetylmuramic acid 6-phosphate etherase.